A 97-amino-acid polypeptide reads, in one-letter code: U6-theraphotoxin-Hhn1a 1 (97 aa).

A signal peptide spans 1 to 33 (MLIKQFSRRSKNMKVQILLAFAALFVLAVGSYA). Residues 34-61 (SESKKLDLRDALFSAMFSADYQLNPQER) constitute a propeptide that is removed on maturation. 3 disulfide bridges follow: C63/C77, C70/C82, and C76/C89.

Belongs to the neurotoxin 10 (Hwtx-1) family. 12 (Hntx-12) subfamily. In terms of tissue distribution, expressed by the venom gland.

The protein localises to the secreted. Ion channel inhibitor. In Cyriopagopus hainanus (Chinese bird spider), this protein is U6-theraphotoxin-Hhn1a 1.